The sequence spans 336 residues: Fructose-1,6-bisphosphatase class 1 (336 aa).

The Mg(2+) site is built by Glu90, Asp112, Leu114, and Asp115. Substrate-binding positions include 115-118 (DGSS), Asn211, and Lys277. Glu283 is a binding site for Mg(2+).

This sequence belongs to the FBPase class 1 family. Homotetramer. It depends on Mg(2+) as a cofactor.

It localises to the cytoplasm. It carries out the reaction beta-D-fructose 1,6-bisphosphate + H2O = beta-D-fructose 6-phosphate + phosphate. The protein operates within carbohydrate biosynthesis; gluconeogenesis. The chain is Fructose-1,6-bisphosphatase class 1 from Pseudomonas putida (strain ATCC 700007 / DSM 6899 / JCM 31910 / BCRC 17059 / LMG 24140 / F1).